The chain runs to 134 residues: MVSLGLVVARFNDSVTEPMAEAAREAATDRDAVIVDEVSVPGAYDSPLAADRLARRDDVDAVAVVGAIVTGDTDHDHVIASATADKLTQVSLDRDTPVTFGVSGPGMSGAEARERIDKGADAAEAAIDLADELD.

5-amino-6-(D-ribitylamino)uracil contacts are provided by residues Phe11, 43 to 45 (AYD), and 67 to 69 (AIV). 72-73 (DT) provides a ligand contact to (2S)-2-hydroxy-3-oxobutyl phosphate. Residue His75 is the Proton donor of the active site. Residue Phe100 participates in 5-amino-6-(D-ribitylamino)uracil binding. Arg115 serves as a coordination point for (2S)-2-hydroxy-3-oxobutyl phosphate.

The protein belongs to the DMRL synthase family.

It carries out the reaction (2S)-2-hydroxy-3-oxobutyl phosphate + 5-amino-6-(D-ribitylamino)uracil = 6,7-dimethyl-8-(1-D-ribityl)lumazine + phosphate + 2 H2O + H(+). Its pathway is cofactor biosynthesis; riboflavin biosynthesis; riboflavin from 2-hydroxy-3-oxobutyl phosphate and 5-amino-6-(D-ribitylamino)uracil: step 1/2. Functionally, catalyzes the formation of 6,7-dimethyl-8-ribityllumazine by condensation of 5-amino-6-(D-ribitylamino)uracil with 3,4-dihydroxy-2-butanone 4-phosphate. This is the penultimate step in the biosynthesis of riboflavin. The chain is 6,7-dimethyl-8-ribityllumazine synthase from Halorubrum lacusprofundi (strain ATCC 49239 / DSM 5036 / JCM 8891 / ACAM 34).